The primary structure comprises 827 residues: Stage II sporulation protein E (827 aa).

Helical transmembrane passes span 49 to 69 (IGFL…ALPF), 71 to 91 (GAML…VLAG), 116 to 136 (VAAF…FFSM), 142 to 162 (GFVY…AIVE), 175 to 195 (QSLP…EEII), 206 to 226 (TGLA…ARYV), 247 to 267 (GLIL…LAFS), 269 to 289 (LLGG…LIVG), 299 to 319 (GSAG…LFLL), and 320 to 340 (TPQS…EHLQ). At 341 to 827 (EQQQYARKIR…AIFQNKQEIS (487 aa)) the chain is on the cytoplasmic side. In terms of domain architecture, PPM-type phosphatase spans 594–804 (STGAAHAAKG…DDMTVVVVRI (211 aa)).

The cofactor is Mn(2+).

It localises to the cell membrane. The enzyme catalyses O-phospho-L-seryl-[protein] + H2O = L-seryl-[protein] + phosphate. It catalyses the reaction O-phospho-L-threonyl-[protein] + H2O = L-threonyl-[protein] + phosphate. Its function is as follows. Normally needed for pro-sigma E processing during sporulation but can be bypassed in vegetative cells. Activates SpoIIAA by dephosphorylation. The protein is Stage II sporulation protein E (spoIIE) of Bacillus subtilis (strain 168).